The chain runs to 518 residues: Wax ester synthase/diacylglycerol acyltransferase 6 (518 aa).

The span at 1-17 shows a compositional bias: basic and acidic residues; it reads MEIKTRRDTSETSVRKD. Positions 1 to 29 are disordered; that stretch reads MEIKTRRDTSETSVRKDDEEEVEEEQPLS. The Cytoplasmic portion of the chain corresponds to 1–213; sequence MEIKTRRDTS…LMAGSRGDSR (213 aa). The Proton acceptor role is filled by His-163. A disordered region spans residues 185–205; that stretch reads PDELPSLPNQNRSSSRSSRLM. A helical transmembrane segment spans residues 214–234; the sequence is FLWLVMVIWSAIMLVLNTVCD. The Lumenal segment spans residues 235-518; it reads ALEFIATTMF…VQERDSRSLD (284 aa). Asn-430 is a glycosylation site (N-linked (GlcNAc...) asparagine).

It in the N-terminal section; belongs to the long-chain O-acyltransferase family. Expressed in roots, stems, leaves, flowers and siliques.

The protein localises to the cell membrane. It is found in the endoplasmic reticulum membrane. It localises to the golgi apparatus membrane. The enzyme catalyses an acyl-CoA + a 1,2-diacyl-sn-glycerol = a triacyl-sn-glycerol + CoA. The catalysed reaction is a long chain fatty alcohol + a fatty acyl-CoA = a wax ester + CoA. The protein operates within glycerolipid metabolism; triacylglycerol biosynthesis. Its pathway is lipid metabolism. Bifunctional wax ester synthase/diacylglycerol acyltransferase that uses acyl-CoAs with 16, 18 and 20 carbons as substrates, preferably in combination with 16:0ol alcohol. Involved in cuticular wax biosynthesis. This chain is Wax ester synthase/diacylglycerol acyltransferase 6, found in Arabidopsis thaliana (Mouse-ear cress).